A 168-amino-acid chain; its full sequence is Alpha-N-acetylgalactosamine-specific lectin (168 aa).

The N-terminal stretch at 1–18 is a signal peptide; the sequence is MAFFRALCFVLLVGFAAA. Positions 38–163 constitute a C-type lectin domain; it reads YNGNCYRYFG…CSRAFAYVCK (126 aa). 2 disulfides stabilise this stretch: cysteine 59/cysteine 162 and cysteine 136/cysteine 154.

As to quaternary structure, monomer, homodimer and homooligomer.

Alpha-N-acetylgalactosamine-specific lectin. The oligomeric form has Ca(2+)-dependent hemagglutination activity towards sheep erythrocytes. Its hemagglutination activity is inhibited by various monosaccharides, oligosaccharides and glycopeptides, including inhibition by GalNAc, blood group A trisaccharide, Tn antigen, mucin and asialomucin. This chain is Alpha-N-acetylgalactosamine-specific lectin, found in Patiria pectinifera (Starfish).